The chain runs to 132 residues: Small ribosomal subunit protein bS16 (132 aa).

The span at 82 to 107 shows a compositional bias: basic and acidic residues; sequence DSKVQSKKEHNANKVKKEVKKPEAKK. A disordered region spans residues 82-132; that stretch reads DSKVQSKKEHNANKVKKEVKKPEAKKAAASKPASKPSASKSASQKKTVSKK. Residues 108–132 show a composition bias toward low complexity; sequence AAASKPASKPSASKSASQKKTVSKK.

Belongs to the bacterial ribosomal protein bS16 family.

This is Small ribosomal subunit protein bS16 from Malacoplasma penetrans (strain HF-2) (Mycoplasma penetrans).